A 366-amino-acid chain; its full sequence is MDPWDTYNIPLDHQHRLRNRRDHRHPSFSSTLLDQIYRSIDDSSTNSSSMRKTKHQNREDTRVSANRRDDFNRSKNLKTIEPVFFKHSSSSSSDSSGFSSSESDYFYRRSKSSPAISHPKPIRTTVERFERSPQNHRPNSSNKQEHGSFLKTKSKALKIYSDLKKVKQPISPGGRLATFLNSIFTGAGNTKKLNKINTTVTSTTAAAAAASSTTTCSSASSFSRSCLSKTPSSSEKSKRSVRFCPVNVIFDEDSSKYNNKNNKVYGNNEREYESIRHTLENRVMEENRRVIEAAKELLRSYQKKNKEVIEVSVEDDEEDDDDDALSCTSSDLFELDNLSAIGIDRYREELPVYETTRLNTNRIISR.

Disordered regions lie at residues 42 to 73 and 129 to 148; these read DSSTNSSSMRKTKHQNREDTRVSANRRDDFNR and FERSPQNHRPNSSNKQEHGS. The segment covering 56–73 has biased composition (basic and acidic residues); it reads QNREDTRVSANRRDDFNR.

The protein belongs to the BIG GRAIN 1 (BG1) plant protein family.

It localises to the cell membrane. Functionally, involved in auxin transport. Regulator of the auxin signaling pathway. The sequence is that of Protein BIG GRAIN 1-like B from Arabidopsis thaliana (Mouse-ear cress).